The sequence spans 218 residues: Pyridoxine/pyridoxamine 5'-phosphate oxidase (218 aa).

Residues 14–17 (RREY) and Lys-72 each bind substrate. Residues 67–72 (RIVLLK), 82–83 (YT), Arg-88, Lys-89, and Gln-111 each bind FMN. Positions 129, 133, and 137 each coordinate substrate. FMN-binding positions include 146 to 147 (QS) and Trp-191. 197-199 (RLH) is a substrate binding site. Arg-201 is a binding site for FMN.

Belongs to the pyridoxamine 5'-phosphate oxidase family. As to quaternary structure, homodimer. FMN is required as a cofactor.

The catalysed reaction is pyridoxamine 5'-phosphate + O2 + H2O = pyridoxal 5'-phosphate + H2O2 + NH4(+). It catalyses the reaction pyridoxine 5'-phosphate + O2 = pyridoxal 5'-phosphate + H2O2. It participates in cofactor metabolism; pyridoxal 5'-phosphate salvage; pyridoxal 5'-phosphate from pyridoxamine 5'-phosphate: step 1/1. The protein operates within cofactor metabolism; pyridoxal 5'-phosphate salvage; pyridoxal 5'-phosphate from pyridoxine 5'-phosphate: step 1/1. Functionally, catalyzes the oxidation of either pyridoxine 5'-phosphate (PNP) or pyridoxamine 5'-phosphate (PMP) into pyridoxal 5'-phosphate (PLP). The protein is Pyridoxine/pyridoxamine 5'-phosphate oxidase of Escherichia coli O157:H7.